Here is a 269-residue protein sequence, read N- to C-terminus: Putative pyruvate, phosphate dikinase regulatory protein (269 aa).

Position 151 to 158 (151 to 158) interacts with ADP; that stretch reads GVSRSSKT.

The protein belongs to the pyruvate, phosphate/water dikinase regulatory protein family. PDRP subfamily.

It catalyses the reaction N(tele)-phospho-L-histidyl/L-threonyl-[pyruvate, phosphate dikinase] + ADP = N(tele)-phospho-L-histidyl/O-phospho-L-threonyl-[pyruvate, phosphate dikinase] + AMP + H(+). The enzyme catalyses N(tele)-phospho-L-histidyl/O-phospho-L-threonyl-[pyruvate, phosphate dikinase] + phosphate + H(+) = N(tele)-phospho-L-histidyl/L-threonyl-[pyruvate, phosphate dikinase] + diphosphate. Bifunctional serine/threonine kinase and phosphorylase involved in the regulation of the pyruvate, phosphate dikinase (PPDK) by catalyzing its phosphorylation/dephosphorylation. The protein is Putative pyruvate, phosphate dikinase regulatory protein of Geobacter sulfurreducens (strain ATCC 51573 / DSM 12127 / PCA).